The primary structure comprises 203 residues: Urease accessory protein UreG (203 aa).

10–17 contributes to the GTP binding site; it reads GPVGAGKT.

It belongs to the SIMIBI class G3E GTPase family. UreG subfamily. In terms of assembly, homodimer. UreD, UreF and UreG form a complex that acts as a GTP-hydrolysis-dependent molecular chaperone, activating the urease apoprotein by helping to assemble the nickel containing metallocenter of UreC. The UreE protein probably delivers the nickel.

It is found in the cytoplasm. Facilitates the functional incorporation of the urease nickel metallocenter. This process requires GTP hydrolysis, probably effectuated by UreG. The sequence is that of Urease accessory protein UreG from Kocuria rhizophila (strain ATCC 9341 / DSM 348 / NBRC 103217 / DC2201).